The primary structure comprises 796 residues: Conidiophore development regulator abaA (796 aa).

Positions 133 to 207 (GKDGEPVWSD…QVLDSFLKGD (75 aa)) form a DNA-binding region, TEA. Residues 215–254 (REQSDRSTAQTQPVGPRWRTSMDHLPSSHYGTHATSSYPE) form a disordered region. Over residues 243-252 (HYGTHATSSY) the composition is skewed to polar residues. Positions 341–362 (LSDVNDPLNCEIILLETNLELM) are leucine-zipper-like. The disordered stretch occupies residues 612-643 (EGLSDKTAPTSVLDPFPNLTQQTTSQTAGINV). The segment covering 629 to 643 (NLTQQTTSQTAGINV) has biased composition (polar residues).

This sequence belongs to the TEC1 family.

It localises to the nucleus. BrlA, abaA and wetA are pivotal regulators of conidiophore development and conidium maturation. They act individually and together to regulate their own expression and that of numerous other sporulation-specific gene. Controls temporal and spatial specificity in Aspergillus development. Directs the differentiation of phialides and is continuously required for maintenance of their function. Expression of abaA leads to activation of brlA and wetA, cessation of vegetative growth, and accentuated cellular vacuolization. Binds to the sequence 5'-CATTCY-3', where Y is a pyrimidine, making both major- and minor-groove contacts. Multiple abaA binding sites are present in the cis-acting regulatory regions of several developmentally controlled structural genes as well as those of the upstream regulatory gene brlA, the downstream regulatory gene wetA, and abaA itself. In Emericella nidulans (strain FGSC A4 / ATCC 38163 / CBS 112.46 / NRRL 194 / M139) (Aspergillus nidulans), this protein is Conidiophore development regulator abaA.